The following is a 445-amino-acid chain: 6-phosphogluconate dehydrogenase, decarboxylating (445 aa).

NADP(+) is bound by residues 1–4, 22–24, 63–65, and N91; these read AVMG, NRS, and VKA. Substrate contacts are provided by residues N91 and 117-119; that span reads SGG. The Proton acceptor role is filled by K172. A substrate-binding site is contributed by 175 to 176; the sequence is HN. The active-site Proton donor is the E179. 5 residues coordinate substrate: Y180, K249, R276, R434, and H440.

It belongs to the 6-phosphogluconate dehydrogenase family. As to quaternary structure, homodimer.

It carries out the reaction 6-phospho-D-gluconate + NADP(+) = D-ribulose 5-phosphate + CO2 + NADPH. The protein operates within carbohydrate degradation; pentose phosphate pathway; D-ribulose 5-phosphate from D-glucose 6-phosphate (oxidative stage): step 3/3. In terms of biological role, catalyzes the oxidative decarboxylation of 6-phosphogluconate to ribulose 5-phosphate and CO(2), with concomitant reduction of NADP to NADPH. This chain is 6-phosphogluconate dehydrogenase, decarboxylating (gnd), found in Shigella sonnei.